A 452-amino-acid chain; its full sequence is Nuclear distribution protein nudF 2 (452 aa).

Residues 76–101 (ALQILDLESKVAGLQAELSSLTLTSR) adopt a coiled-coil conformation. WD repeat units follow at residues 123–164 (SHRD…RTLK), 166–206 (HIRA…ANIR), 210–250 (GHDH…CVKV), 253–292 (SSDA…QKSA), 295–355 (GHEN…IKTL), 357–396 (GHDN…KLVK), and 401–449 (AHSH…SCVR).

Belongs to the WD repeat LIS1/nudF family. As to quaternary structure, self-associates. Interacts with nudE and dynein.

The protein resides in the cytoplasm. It localises to the cytoskeleton. It is found in the spindle pole. Its function is as follows. Positively regulates the activity of the minus-end directed microtubule motor protein dynein. May enhance dynein-mediated microtubule sliding by targeting dynein to the microtubule plus end. Required for nuclear migration during vegetative growth as well as development. Required for retrograde early endosome (EE) transport from the hyphal tip. Required for localization of dynein to the mitotic spindle poles. Recruits additional proteins to the dynein complex at SPBs. The polypeptide is Nuclear distribution protein nudF 2 (Talaromyces marneffei (strain ATCC 18224 / CBS 334.59 / QM 7333) (Penicillium marneffei)).